We begin with the raw amino-acid sequence, 1166 residues long: ATP-dependent helicase/deoxyribonuclease subunit B (1166 aa).

The region spanning Met1–Arg285 is the UvrD-like helicase ATP-binding domain. Residue Gly8–Thr15 participates in ATP binding. Residues Glu279–Asp586 enclose the UvrD-like helicase C-terminal domain. Residues Cys801, Cys1121, Cys1124, and Cys1130 each coordinate [4Fe-4S] cluster.

Belongs to the helicase family. AddB/RexB type 1 subfamily. Heterodimer of AddA and AddB. Mg(2+) is required as a cofactor. Requires [4Fe-4S] cluster as cofactor.

In terms of biological role, the heterodimer acts as both an ATP-dependent DNA helicase and an ATP-dependent, dual-direction single-stranded exonuclease. Recognizes the chi site generating a DNA molecule suitable for the initiation of homologous recombination. The AddB subunit has 5' -&gt; 3' nuclease activity but not helicase activity. This is ATP-dependent helicase/deoxyribonuclease subunit B from Bacillus licheniformis (strain ATCC 14580 / DSM 13 / JCM 2505 / CCUG 7422 / NBRC 12200 / NCIMB 9375 / NCTC 10341 / NRRL NRS-1264 / Gibson 46).